The primary structure comprises 594 residues: CRISPR-associated DNA-binding protein Cas12m (594 aa).

Positions 1–85 are recognition domain (REC1-N); it reads MSRLEARTRY…EKVRQVMVFE (85 aa). Residues 86–153 are recognition domain (REC2); it reads SETTKKIKEL…ERSFIFEARK (68 aa). The tract at residues 154-211 is recognition domain (REC1-C); sequence QELAQLEKERWAVVKELGKGSGLYWCNLEDVVNSYDIGRKKAKAAGGEMRFHRWDGTG. Residues 212-314 are wedge domain (WED); sequence KVTVRFQKGL…RYKLNLVLEI (103 aa). The tract at residues 315–329 is linker; it reads LGENTNRILPALEGT. Residues 330-540 are ruvC-I; the sequence is AAIDLGWRTV…KNHVEFTYVP (211 aa). The target nucleic-acid binding (TNB) stretch occupies residues 541-575; the sequence is AENTTITCHKCGHKEKFDAAAQIIHTCSTCGELWD. Zn(2+)-binding residues include Cys-548, Cys-551, Cys-567, and Cys-570. The segment at 576 to 594 is ruvC-II; sequence QDYNAAKNLLAFSQKGGVK. A Mg(2+)-binding site is contributed by Asp-577.

This sequence belongs to the CRISPR-associated DNA-binding protein Cas12m family. It depends on Mg(2+) as a cofactor. The cofactor is Zn(2+).

In terms of biological role, CRISPR (clustered regularly interspaced short palindromic repeat), is an adaptive immune system that provides protection against mobile genetic elements (viruses, transposable elements and conjugative plasmids). CRISPR clusters contain sequences complementary to antecedent mobile elements and target invading nucleic acids. CRISPR clusters are transcribed and processed into CRISPR RNA (crRNA). Recognizes a short motif in the CRISPR repeat sequences (the 5' PAM or protospacer adjacent motif, 5'-C/TCN-3' in this organism) to help distinguish self versus nonself, as targets within the bacterial CRISPR locus do not have PAMs. Upon expression in E.coli as a CRISPR locus inhibits plasmid propagation when targeted to regions essential for plasmid propagation (replication origin but not a selectable marker), probably by inhibiting transcription. Cas12m-crRNA binds DNA in a PAM-dependent, crRNA-guided fashion. Upon expression in E.coli as a CRISPR region preferentially binds to its associated crRNA. Probably required for pre-crRNA processing to mature crRNA. This is CRISPR-associated DNA-binding protein Cas12m from Thermanaerosceptrum fracticalcis.